Reading from the N-terminus, the 231-residue chain is ADP-ribose pyrophosphatase (231 aa).

Position 2 is an N-acetylserine (Phe2). Residues Trp46, 64–65, Arg69, and Arg103 each bind substrate; that span reads WD. The Nudix hydrolase domain maps to 75–214; the sequence is GGVDGIGILT…DQQGYKLDAR (140 aa). Residue Ala115 participates in Mg(2+) binding. A Nudix box motif is present at residues 116-137; sequence GLIDAGEDIDTAALRELKEETG. Leu117 lines the substrate pocket. Mg(2+) contacts are provided by Glu131 and Glu135. A substrate-binding site is contributed by Asp152. Glu185 contacts Mg(2+).

It belongs to the Nudix hydrolase family. NudF subfamily. It depends on Mg(2+) as a cofactor. Requires Mn(2+) as cofactor.

The enzyme catalyses ADP-D-ribose + H2O = D-ribose 5-phosphate + AMP + 2 H(+). The polypeptide is ADP-ribose pyrophosphatase (YSA1) (Saccharomyces cerevisiae (strain ATCC 204508 / S288c) (Baker's yeast)).